The chain runs to 432 residues: Ribosome biogenesis protein WDR12 homolog (432 aa).

A ubiquitin-like (UBL) domain region spans residues 13 to 97 (LQIRLVALNK…ESVIEVVYFQ (85 aa)). 7 WD repeats span residues 109–146 (LHSDWIKSVRSKDDCILAGSLDGTARIWNMAGEEYAIF), 148–190 (GHES…KSVE), 197–236 (GHTQAVNAVTVNQSKTKICSVSSDKMIKIWSTDCSRKDDD), 265–303 (GHTDGIDAVVWPKEAEIITAGWDHRIKIWDTEVGVNKSD), 305–345 (NVNK…DQTV), 352–392 (SHKN…APLY), and 396–432 (GHEDKVLAVDWSEPQYIVSGGADNRIQIYQREVAQRS).

Belongs to the WD repeat WDR12/YTM1 family.

The protein localises to the nucleus. It is found in the nucleolus. It localises to the nucleoplasm. Its function is as follows. Required for maturation of ribosomal RNAs and formation of the large ribosomal subunit. The sequence is that of Ribosome biogenesis protein WDR12 homolog from Trichoplax adhaerens (Trichoplax reptans).